The primary structure comprises 18562 residues: Titin homolog (18562 aa).

The 87-residue stretch at P90–T176 folds into the Ig-like 1 domain. Residues R384–E404 are disordered. 4 Ig-like domains span residues P406–T493, P821–N913, P943–S1038, and P1135–D1225. Cysteines 842 and 897 form a disulfide. Residues L1336–N1360 are disordered. In terms of domain architecture, Ig-like 6 spans P1679–S1762. C1700 and C1751 are joined by a disulfide. 3 coiled-coil regions span residues L1766–K1786, Q2011–S2038, and I2065–E2085. Residues R2155–A2177 are disordered. The segment covering R2163–P2172 has biased composition (basic residues). Positions L2205–L2231 form a coiled coil. Disordered stretches follow at residues I2298–A2459 and K2614–A2637. Over residues R2309 to N2323 the composition is skewed to low complexity. Residues L2324–E2341 are compositionally biased toward polar residues. Residues L2606–E2630 adopt a coiled-coil conformation. The span at E2621–T2636 shows a compositional bias: acidic residues. Ig-like domains lie at K3095 to Y3177 and T3179 to S3264. The interval E3362–S3692 is disordered. The span at S3655–N3665 shows a compositional bias: acidic residues. 3 consecutive Ig-like domains span residues P3789–V3878, P3897–D3985, and P4038–T4125. 2 disulfides stabilise this stretch: C3919–C3969 and C4059–C4109. 14 disordered regions span residues Q4553–T4599, T4634–E4699, G4750–V4814, P4826–P4855, S4912–K4931, P4950–S4969, P4989–E5216, G5267–P5294, P5306–S5325, P5345–P5372, G5428–T6101, V6127–P6157, S6214–E6900, and A6930–L8453. A compositionally biased stretch (basic and acidic residues) spans R4555–S4577. 56 PVET repeats span residues T4599–P4626, V4627–P4665, V4666–T4704, P4755–P4787, V4788–P4826, V4827–T4865, A4917–P4948, V4949–P4987, V4988–P5026, V5027–P5065, V5066–P5104, V5105–P5143, V5144–P5182, V5183–T5221, A5273–P5304, V5305–P5343, V5344–T5382, A5434–P5465, V5466–P5504, V5505–P5543, V5544–P5582, V5583–P5621, V5622–S5660, V5661–S5699, V5700–P5738, V5739–Q5777, V5778–P5816, V5817–P5855, V5856–S5894, V5895–P5933, V5934–Q5972, V5973–P6011, V6012–Q6050, V6051–S6089, V6090–Q6128, V6129–T6167, A6219–P6250, V6251–P6289, V6290–P6328, V6329–P6367, V6368–P6406, V6407–S6445, V6446–S6484, V6485–P6523, V6524–Q6562, V6563–P6601, V6602–P6640, V6641–Q6679, V6680–P6718, V6719–A6757, V6758–P6796, V6797–P6835, V6836–P6874, V6875–P6913, V6914–P6952, and V6953–K6991. Basic and acidic residues-rich tracts occupy residues T4638–S4651 and T4677–E4691. Positions T4960–S4969 are enriched in basic and acidic residues. The span at T5038 to S5051 shows a compositional bias: basic and acidic residues. Basic and acidic residues-rich tracts occupy residues T5116–S5129 and T5155–S5168. Residues A5212–V5235 are a coiled coil. Over residues T5316–S5325 the composition is skewed to basic and acidic residues. 2 stretches are compositionally biased toward basic and acidic residues: residues T5477–S5490 and T5516–S5529. Basic and acidic residues-rich tracts occupy residues P6690–S6704, P6729–S6743, P6768–S6782, P6807–S6821, P6846–S6860, and P6885–S6899. Composition is skewed to basic and acidic residues over residues E6972–K7606, L7613–K7630, L7637–K8062, and L8069–L8453. Residues Q6984–K7812 adopt a coiled-coil conformation. BLUE repeat units lie at residues E6992 to K6996, H6997 to K7012, L7013 to K7028, L7029 to K7044, L7045 to K7060, L7061 to K7076, L7077 to K7092, L7093 to K7108, L7109 to K7124, L7125 to K7140, L7141 to K7156, L7157 to K7172, L7173 to K7188, L7189 to K7204, L7205 to K7220, L7221 to K7236, L7237 to K7252, L7253 to K7268, L7269 to K7284, L7285 to K7300, L7301 to K7316, L7317 to R7332, L7333 to K7348, L7349 to K7364, L7365 to K7380, L7381 to K7396, L7397 to K7412, L7413 to K7428, L7429 to K7444, L7445 to K7460, L7461 to K7476, L7477 to K7492, L7493 to K7508, L7509 to K7524, L7525 to K7540, L7541 to K7556, L7557 to K7572, L7573 to K7588, L7589 to N7604, F7605 to K7620, L7621 to N7628, F7629 to K7644, L7645 to K7652, L7653 to K7668, L7669 to K7684, L7685 to K7700, L7701 to K7716, L7717 to K7732, L7733 to K7748, L7749 to K7764, L7765 to K7772, L7773 to K7788, L7789 to K7804, L7805 to K7820, L7821 to K7836, L7837 to K7852, L7853 to K7868, L7869 to K7884, L7885 to K7900, L7901 to K7916, L7917 to K7932, L7933 to K7948, L7949 to K7964, L7965 to K7980, L7981 to K7996, L7997 to K8012, L8013 to K8028, L8029 to K8044, L8045 to N8060, F8061 to K8076, L8077 to K8084, L8085 to K8100, L8101 to K8116, L8117 to K8132, L8133 to K8148, L8149 to K8164, L8165 to K8180, L8181 to K8196, L8197 to K8212, L8213 to K8228, L8229 to K8244, L8245 to K8260, L8261 to K8276, L8277 to K8292, L8293 to K8308, L8309 to K8324, L8325 to K8340, L8341 to K8356, L8357 to D8371, L8373 to K8388, L8389 to K8404, L8405 to K8420, L8421 to K8436, L8437 to K8452, L8453 to K8468, and L8469 to K8484. Residues K7876–K8273 are a coiled coil. Positions K8316–Q8490 form a coiled coil. Over residues K8599–E8611 the composition is skewed to basic residues. A disordered region spans residues K8599–S8626. The span at K8612–S8626 shows a compositional bias: basic and acidic residues. Residues K8950 to Y9041 form the Fibronectin type-III 1 domain. 20 disordered regions span residues I9079–E9104, V9147–E9436, E9481–S9609, A9702–I10224, E10239–P10274, Q10539–T11018, E11030–Q11111, K11123–T11213, A11225–S11387, K11420–L11592, L11624–L11825, L11872–S11955, T11996–N12054, G12397–R12418, E12537–S12974, E13026–V13045, A13065–K13261, Q13283–K13514, E13553–L13574, and E13594–G13874. The span at K9084–K9093 shows a compositional bias: basic residues. Composition is skewed to basic and acidic residues over residues V9172–L9184 and T9191–K9202. The span at S9213 to Q9231 shows a compositional bias: polar residues. The segment covering S9232 to P9267 has biased composition (basic and acidic residues). A compositionally biased stretch (low complexity) spans S9273–A9283. A compositionally biased stretch (basic and acidic residues) spans E9295 to P9332. The span at S9346 to S9359 shows a compositional bias: low complexity. The stretch at A9371 to Q9510 forms a coiled coil. Basic and acidic residues-rich tracts occupy residues V9373–E9436 and E9481–K9521. Over residues S9547–T9558 the composition is skewed to low complexity. Residues T9577–D9749 are a coiled coil. 2 stretches are compositionally biased toward basic and acidic residues: residues S9578–S9609 and A9702–P9783. Over residues S9798–V9809 the composition is skewed to polar residues. 3 stretches are compositionally biased toward basic and acidic residues: residues E9819–P10004, E10040–N10149, and V10162–E10196. 2 coiled-coil regions span residues K9822–A9995 and E10046–K10129. The span at K10197–D10206 shows a compositional bias: basic residues. Positions T10207–I10224 are enriched in basic and acidic residues. A compositionally biased stretch (polar residues) spans E10239–K10250. A Fibronectin type-III 2 domain is found at K10461–E10553. Residues E10566 to F10609 are compositionally biased toward basic and acidic residues. Positions S10612–H10637 are enriched in polar residues. Residues I10663–P10680 are compositionally biased toward acidic residues. Residues M10707 to E10716 show a composition bias toward basic and acidic residues. Positions A10779 to N10790 are enriched in polar residues. 2 stretches are compositionally biased toward basic and acidic residues: residues Q10840–M10852 and K10863–D10884. Over residues L10961 to G10975 the composition is skewed to polar residues. Basic and acidic residues-rich tracts occupy residues I10999–E11009, S11045–D11055, and S11076–N11089. Positions T11018–Q11064 form a coiled coil. Residues T11090–Q11108 show a composition bias toward polar residues. A compositionally biased stretch (basic and acidic residues) spans K11159–H11173. Low complexity predominate over residues L11174–T11187. Basic and acidic residues-rich tracts occupy residues K11195–D11211, I11271–K11280, and E11295–L11318. Positions S11374–S11387 are enriched in polar residues. Composition is skewed to basic and acidic residues over residues K11440–K11464 and G11472–T11485. Polar residues predominate over residues M11503–A11515. Composition is skewed to basic and acidic residues over residues L11624–K11635, A11645–E11669, and V11722–V11735. The span at E11754–V11767 shows a compositional bias: polar residues. Positions A11916–Q11937 are enriched in basic and acidic residues. Residues E12408–N12428 adopt a coiled-coil conformation. The Ig-like 12 domain occupies P12432 to D12547. Composition is skewed to basic and acidic residues over residues E12537 to D12547, L12555 to K12567, and V12609 to A12689. Residues S12690–P12701 are compositionally biased toward low complexity. Over residues T12729–I12740 the composition is skewed to polar residues. 3 stretches are compositionally biased toward basic and acidic residues: residues E12766–S12839, E12852–K12865, and P12889–S12940. A coiled-coil region spans residues K12797–I12828. Residues A12980–K13103 adopt a coiled-coil conformation. 7 stretches are compositionally biased toward basic and acidic residues: residues A13065–E13124, P13133–G13145, T13176–T13191, E13203–K13261, Q13283–A13327, A13337–K13354, and L13361–P13416. Residues L13237–K13380 adopt a coiled-coil conformation. Positions S13431–V13442 are enriched in polar residues. Positions E13452–K13514 are enriched in basic and acidic residues. Positions K13455–A13628 form a coiled coil. Residues E13594–P13637 show a composition bias toward basic and acidic residues. Low complexity predominate over residues S13651–S13662. Polar residues predominate over residues K13684–T13696. Over residues I13697–P13735 the composition is skewed to basic and acidic residues. Over residues S13747–S13760 the composition is skewed to low complexity. Residues K13761–P13770 are compositionally biased toward basic and acidic residues. Residues S13784–D13793 are compositionally biased toward polar residues. 2 stretches are compositionally biased toward basic and acidic residues: residues I13795–E13808 and S13824–T13843. The Ig-like 13 domain occupies P13963–Y14036. 3 Fibronectin type-III domains span residues A14153–P14247, V14253–G14348, and V14350–D14448. Ig-like domains follow at residues P14451–S14542, S14550–N14634, and P14638–E14727. C14568 and C14618 form a disulfide bridge. 2 Fibronectin type-III domains span residues A14826–S14920 and I14937–G15027. Residues V15011 to K15180 are disordered. 2 stretches are compositionally biased toward basic and acidic residues: residues K15034–V15060 and K15085–R15117. The span at G15118–T15132 shows a compositional bias: polar residues. Positions S15133–E15177 are enriched in basic and acidic residues. 2 Ig-like domains span residues K15180–A15274 and P15283–R15371. Fibronectin type-III domains are found at residues P15383–K15475 and Q15503–S15596. The segment at T15470–Q15503 is disordered. Basic and acidic residues predominate over residues K15473 to Q15503. Ig-like domains are found at residues P15599 to T15687 and P15692 to T15786. One can recognise a Fibronectin type-III 10 domain in the interval A15791–N15883. One can recognise a Protein kinase domain in the interval Y15934–I16189. Residues L15940 to V15948 and K15963 contribute to the ATP site. D16055 acts as the Proton acceptor in catalysis. An autoinhibitory domain region spans residues K16206–T16264. 4 consecutive Ig-like domains span residues P16268–S16358, G16500–N16575, P16605–V16692, and P16705–T16789. Cystine bridges form between C16290–C16342, C16508–C16571, C16627–C16677, and C16726–C16778. The segment at L16805–Q16827 is disordered. 3 consecutive Ig-like domains span residues P16829–V16918, P16932–S17025, and P17037–S17126. Residues Q17121–V17169 form a disordered region. A compositionally biased stretch (basic and acidic residues) spans K17129–K17150. One can recognise a Fibronectin type-III 11 domain in the interval R17154–V17245. Ig-like domains are found at residues P17249–T17336, P17358–A17447, P17457–A17548, P17570–I17661, P17676–T17765, P17782–S17873, P18008–D18097, P18121–S18213, P18224–D18316, P18329–T18417, and P18429–S18519. Intrachain disulfides connect C17379-C17431 and C17478-C17530. C17697 and C17754 are joined by a disulfide. The cysteines at positions 18143 and 18195 are disulfide-linked.

It belongs to the protein kinase superfamily. CAMK Ser/Thr protein kinase family. Interacts (via C-terminus) with myosin. Interacts with actin. The cofactor is Mg(2+). In terms of tissue distribution, expression is restricted to body wall, enteric and vulval muscles.

The protein localises to the cytoplasm. It localises to the myofibril. The protein resides in the sarcomere. Its subcellular location is the a band. It is found in the i band. The protein localises to the nucleus membrane. The catalysed reaction is L-seryl-[protein] + ATP = O-phospho-L-seryl-[protein] + ADP + H(+). It carries out the reaction L-threonyl-[protein] + ATP = O-phospho-L-threonyl-[protein] + ADP + H(+). In terms of biological role, serine/threonine-protein kinase. Key component in the assembly and functioning of muscles. By providing connections at the level of individual microfilaments, it contributes to the fine balance of forces between the two halves of the sarcomere. The size and extensibility of the cross-links are the main determinants of sarcomere extensibility properties of muscle. In non-muscle cells, seems to play a role in chromosome condensation and chromosome segregation during mitosis. Might link the lamina network to chromatin or nuclear actin, or both during interphase. The protein is Titin homolog of Caenorhabditis elegans.